The primary structure comprises 630 residues: Triacylglycerol lipase ptl2 (630 aa).

One can recognise a PNPLA domain in the interval Leu-251–Arg-442. The GXSXG signature appears at Gly-282 to Gly-286. The active-site Nucleophile is the Ser-284. The active-site Proton acceptor is Asp-429.

Belongs to the PLPL family.

It localises to the lipid droplet. The enzyme catalyses a triacylglycerol + H2O = a diacylglycerol + a fatty acid + H(+). In terms of biological role, lipid particle-localized triacylglycerol (TAG) lipase. The lipid droplet/particle is a lipid storage compartment which serves as a depot of energy and building blocks for membrane lipid biosynthesis. Involved in the mobilization of the non-polar storage lipids triacylglycerols (TAGs) from lipid particles by hydrolysis of TAGs, releasing and supplying specific fatty acids to the appropriate metabolic pathways. The chain is Triacylglycerol lipase ptl2 (ptl2) from Schizosaccharomyces pombe (strain 972 / ATCC 24843) (Fission yeast).